The sequence spans 161 residues: MASTKRRLNREESSVVLGEEQVAELKEAFELFDKDRTGFIKKDALKTTCKQFGVFVMEDQLDAMFAEADTTKSGAIGFPEFMSMMSRRMKQTSNEQILMNAFKTFDPEGNGYILTKDLSKALTTLGDKLTEAELQELLSISENEQKQVKYDLFVNTLFSKK.

A phosphoserine mark is found at Ser-13 and Ser-14. EF-hand domains are found at residues 20–55 (EQVA…FGVF), 56–91 (VMED…RMKQ), and 93–128 (SNEQ…LGDK).

As to quaternary structure, myosin is a hexamer of 2 heavy chains and 4 light chains (two regulatory light chains and two essential light chains).

The protein is Myosin regulatory light chain (mlcR) of Dictyostelium discoideum (Social amoeba).